The sequence spans 84 residues: Large ribosomal subunit protein uL23 (84 aa).

Belongs to the universal ribosomal protein uL23 family. As to quaternary structure, part of the 50S ribosomal subunit. Contacts protein L29.

In terms of biological role, binds to 23S rRNA. One of the proteins that surrounds the polypeptide exit tunnel on the outside of the ribosome. The protein is Large ribosomal subunit protein uL23 of Thermoplasma acidophilum (strain ATCC 25905 / DSM 1728 / JCM 9062 / NBRC 15155 / AMRC-C165).